Here is a 374-residue protein sequence, read N- to C-terminus: NADH-quinone oxidoreductase subunit D 1 (374 aa).

Belongs to the complex I 49 kDa subunit family. In terms of assembly, NDH-1 is composed of 14 different subunits. Subunits NuoB, C, D, E, F, and G constitute the peripheral sector of the complex.

The protein localises to the cell membrane. It carries out the reaction a quinone + NADH + 5 H(+)(in) = a quinol + NAD(+) + 4 H(+)(out). NDH-1 shuttles electrons from NADH, via FMN and iron-sulfur (Fe-S) centers, to quinones in the respiratory chain. The immediate electron acceptor for the enzyme in this species is believed to be ubiquinone. Couples the redox reaction to proton translocation (for every two electrons transferred, four hydrogen ions are translocated across the cytoplasmic membrane), and thus conserves the redox energy in a proton gradient. The chain is NADH-quinone oxidoreductase subunit D 1 from Roseiflexus sp. (strain RS-1).